Reading from the N-terminus, the 102-residue chain is Aspartyl/glutamyl-tRNA(Asn/Gln) amidotransferase subunit C (102 aa).

This sequence belongs to the GatC family. Heterotrimer of A, B and C subunits.

The catalysed reaction is L-glutamyl-tRNA(Gln) + L-glutamine + ATP + H2O = L-glutaminyl-tRNA(Gln) + L-glutamate + ADP + phosphate + H(+). It carries out the reaction L-aspartyl-tRNA(Asn) + L-glutamine + ATP + H2O = L-asparaginyl-tRNA(Asn) + L-glutamate + ADP + phosphate + 2 H(+). Functionally, allows the formation of correctly charged Asn-tRNA(Asn) or Gln-tRNA(Gln) through the transamidation of misacylated Asp-tRNA(Asn) or Glu-tRNA(Gln) in organisms which lack either or both of asparaginyl-tRNA or glutaminyl-tRNA synthetases. The reaction takes place in the presence of glutamine and ATP through an activated phospho-Asp-tRNA(Asn) or phospho-Glu-tRNA(Gln). The protein is Aspartyl/glutamyl-tRNA(Asn/Gln) amidotransferase subunit C of Bordetella pertussis (strain Tohama I / ATCC BAA-589 / NCTC 13251).